We begin with the raw amino-acid sequence, 459 residues long: Biphenyl dioxygenase subunit alpha (459 aa).

The region spanning 58–156 (WLLLGHESHV…KEGDCGFDKA (99 aa)) is the Rieske domain. [2Fe-2S] cluster is bound by residues Cys100, His102, Cys120, and His123. His233 and His239 together coordinate Fe cation.

This sequence belongs to the bacterial ring-hydroxylating dioxygenase alpha subunit family. In terms of assembly, heterohexamer consisting of three BphA subunits and three BphE subunits. A ferredoxin (BphF) and a ferredoxin reductase (BphG) must be present to obtain activity. Requires [2Fe-2S] cluster as cofactor. The cofactor is Fe cation.

The catalysed reaction is biphenyl + NADH + O2 + H(+) = (2R,3S)-3-phenylcyclohexa-3,5-diene-1,2-diol + NAD(+). It functions in the pathway xenobiotic degradation; biphenyl degradation; 2-hydroxy-2,4-pentadienoate and benzoate from biphenyl: step 1/4. The polypeptide is Biphenyl dioxygenase subunit alpha (bphA) (Paraburkholderia xenovorans (strain LB400)).